A 216-amino-acid chain; its full sequence is MOB kinase activator 3C (216 aa).

Zn(2+)-binding residues include Cys-82, Cys-87, His-164, and His-169.

The protein belongs to the MOB1/phocein family.

Functionally, may regulate the activity of kinases. In Bos taurus (Bovine), this protein is MOB kinase activator 3C (MOB3C).